The chain runs to 248 residues: Isoprenyl transferase (248 aa).

Aspartate 23 is a catalytic residue. A Mg(2+)-binding site is contributed by aspartate 23. Residues 24–27 (GNGR), tryptophan 28, arginine 36, histidine 40, and 68–70 (STE) contribute to the substrate site. The active-site Proton acceptor is the asparagine 71. Residues tryptophan 72, arginine 74, arginine 185, and 191 to 193 (RIS) contribute to the substrate site. Glutamate 204 contributes to the Mg(2+) binding site.

The protein belongs to the UPP synthase family. In terms of assembly, homodimer. Mg(2+) is required as a cofactor.

In terms of biological role, catalyzes the condensation of isopentenyl diphosphate (IPP) with allylic pyrophosphates generating different type of terpenoids. The polypeptide is Isoprenyl transferase (Neisseria meningitidis serogroup A / serotype 4A (strain DSM 15465 / Z2491)).